Here is a 533-residue protein sequence, read N- to C-terminus: uncharacterized protein (533 aa).

Composition is skewed to polar residues over residues 30–43, 79–91, 231–247, and 254–263; these read SQQG…VKNH, NAGT…THLS, NVKS…SSSA, and GRQSNSPNSN. Disordered regions lie at residues 30–92 and 221–274; these read SQQG…HLSA and SLSP…PGAS. The residue at position 336 (serine 336) is a Phosphoserine. The tract at residues 475 to 510 is disordered; sequence HPSLSNSAASPPVSSPGLRRSHIPVHEGLKHTRDGV. The segment covering 476–490 has biased composition (low complexity); sequence PSLSNSAASPPVSSP. Residues 498–510 show a composition bias toward basic and acidic residues; that stretch reads PVHEGLKHTRDGV.

The protein localises to the nucleus. This is an uncharacterized protein from Schizosaccharomyces pombe (strain 972 / ATCC 24843) (Fission yeast).